A 252-amino-acid chain; its full sequence is MISLNKLGVTYPNGTEALHNISIELNQGEFTVILGSSGAGKSTLLRCINFLTYPTSGKVIIEGNGDLNHPKILQKHRQRTGMIFQQHQLIPRQTALKNVLVGRLGYHSTLRSLFPLPKTDQYIALNCLERVGLLEKALTPVQALSGGQQQRVGIARALAQKPKFILADEPIASLDPASSHQVLSNLQKICQEDRIGALISLHQVDLALQYAQRIIGLGKGTILFDCNPSEIKKQQLEEIYQTLSYNPISKTI.

The region spanning 2–244 (ISLNKLGVTY…QLEEIYQTLS (243 aa)) is the ABC transporter domain. 35–42 (GSSGAGKS) provides a ligand contact to ATP.

This sequence belongs to the ABC transporter superfamily. Phosphonates importer (TC 3.A.1.9.1) family. In terms of assembly, the complex is composed of two ATP-binding proteins (PhnC), two transmembrane proteins (PhnE) and a solute-binding protein (PhnD).

It localises to the cell inner membrane. It catalyses the reaction phosphonate(out) + ATP + H2O = phosphonate(in) + ADP + phosphate + H(+). In terms of biological role, part of the ABC transporter complex PhnCDE involved in phosphonates import. Responsible for energy coupling to the transport system. This is Phosphonates import ATP-binding protein PhnC 1 from Trichodesmium erythraeum (strain IMS101).